Here is a 224-residue protein sequence, read N- to C-terminus: Ribosome maturation factor RimP (224 aa).

The segment at 194-224 (REGRIPGDDLGSEEAGEQSDETASGEAEDKE) is disordered. Residues 203 to 213 (LGSEEAGEQSD) are compositionally biased toward acidic residues.

This sequence belongs to the RimP family.

It localises to the cytoplasm. Functionally, required for maturation of 30S ribosomal subunits. The polypeptide is Ribosome maturation factor RimP (Brucella anthropi (strain ATCC 49188 / DSM 6882 / CCUG 24695 / JCM 21032 / LMG 3331 / NBRC 15819 / NCTC 12168 / Alc 37) (Ochrobactrum anthropi)).